Reading from the N-terminus, the 604-residue chain is Aspartate--tRNA(Asp/Asn) ligase (604 aa).

Residue Glu168 coordinates L-aspartate. The aspartate stretch occupies residues 192-195; the sequence is QLFK. Arg214 lines the L-aspartate pocket. ATP-binding positions include 214–216 and Gln223; that span reads RDE. His446 contacts L-aspartate. Residue Glu480 coordinates ATP. An L-aspartate-binding site is contributed by Arg487. An ATP-binding site is contributed by 532 to 535; it reads GWDR. A disordered region spans residues 575–604; that stretch reads LEAGVDARPKPEARAQAGTAGPAAPVADPT. Basic and acidic residues predominate over residues 577-587; the sequence is AGVDARPKPEA. Residues 588 to 604 show a composition bias toward low complexity; the sequence is RAQAGTAGPAAPVADPT.

It belongs to the class-II aminoacyl-tRNA synthetase family. Type 1 subfamily. In terms of assembly, homodimer.

The protein localises to the cytoplasm. It carries out the reaction tRNA(Asx) + L-aspartate + ATP = L-aspartyl-tRNA(Asx) + AMP + diphosphate. Its function is as follows. Aspartyl-tRNA synthetase with relaxed tRNA specificity since it is able to aspartylate not only its cognate tRNA(Asp) but also tRNA(Asn). Reaction proceeds in two steps: L-aspartate is first activated by ATP to form Asp-AMP and then transferred to the acceptor end of tRNA(Asp/Asn). In Salinispora arenicola (strain CNS-205), this protein is Aspartate--tRNA(Asp/Asn) ligase.